The sequence spans 272 residues: NAD kinase (272 aa).

Catalysis depends on Asp62, which acts as the Proton acceptor. NAD(+) contacts are provided by residues 62-63 (DG), Arg67, 129-130 (NE), Arg140, Lys157, Asp159, 170-175 (SSYSSS), Ala194, and Gln229.

This sequence belongs to the NAD kinase family. The cofactor is a divalent metal cation.

The protein resides in the cytoplasm. It carries out the reaction NAD(+) + ATP = ADP + NADP(+) + H(+). Functionally, involved in the regulation of the intracellular balance of NAD and NADP, and is a key enzyme in the biosynthesis of NADP. Catalyzes specifically the phosphorylation on 2'-hydroxyl of the adenosine moiety of NAD to yield NADP. The polypeptide is NAD kinase (Thermoplasma volcanium (strain ATCC 51530 / DSM 4299 / JCM 9571 / NBRC 15438 / GSS1)).